Reading from the N-terminus, the 534-residue chain is Cytokinin dehydrogenase 1 (534 aa).

Residues 1-18 (MAVVYYLLLAGLIACSHA) form the signal peptide. Asparagine 52, asparagine 63, and asparagine 89 each carry an N-linked (GlcNAc...) asparagine glycan. Residues 65-245 (TSALPAAVLY…TRARIAVEPA (181 aa)) form the FAD-binding PCMH-type domain. The FAD site is built by phenylalanine 100, glycine 102, arginine 103, and glycine 104. The residue at position 105 (histidine 105) is a Pros-8alpha-FAD histidine. Positions 106 and 110 each coordinate FAD. Residue asparagine 134 is glycosylated (N-linked (GlcNAc...) asparagine). 5 residues coordinate FAD: aspartate 169, threonine 174, serine 180, isoleucine 184, and isoleucine 235. Residue aspartate 169 participates in N(6)-dimethylallyladenine binding. Aspartate 169 lines the trans-zeatin pocket. Asparagine 294, asparagine 323, and asparagine 338 each carry an N-linked (GlcNAc...) asparagine glycan. Position 381 (glutamate 381) interacts with N(6)-dimethylallyladenine. Glutamate 381 serves as a coordination point for trans-zeatin. Asparagine 434 carries N-linked (GlcNAc...) asparagine glycosylation. A trans-zeatin-binding site is contributed by serine 456. Residues tyrosine 491, serine 527, and glutamine 530 each coordinate FAD.

This sequence belongs to the oxygen-dependent FAD-linked oxidoreductase family. As to quaternary structure, monomer. FAD is required as a cofactor. Glycosylated; with approximately 10 hexose residues per site. Expressed in immature kernels and unpollinated cobs. Weakly expressed in kernels harvested two weeks after anthesis.

It is found in the secreted. The protein localises to the extracellular space. The enzyme catalyses N(6)-dimethylallyladenine + A + H2O = 3-methyl-2-butenal + adenine + AH2. Its activity is regulated as follows. Competitive inhibition by phenylureas. Its function is as follows. Catalyzes the oxidation of cytokinins, a family of N(6)-substituted adenine derivatives that are plant hormones, where the substituent is an isopentenyl group. Cleaves trans-zeatin, N(6)-dimethylallyladenine (isopentenyladenine), isopentenyladenosine, zeatin riboside and cis-zeatin, but not dihydrozeatin, kinetin and benzylaminopurine. This Zea mays (Maize) protein is Cytokinin dehydrogenase 1 (CKX1).